The sequence spans 382 residues: Carbamoyl phosphate synthase small chain (382 aa).

The tract at residues 1 to 189 is CPSase; it reads MIKSALLVLE…GLPEAKKEDE (189 aa). The L-glutamine site is built by serine 47, glycine 241, and glycine 243. The 188-residue stretch at 193 to 380 folds into the Glutamine amidotransferase type-1 domain; sequence HVVAYDFGAK…IELIEQYRKT (188 aa). Cysteine 269 (nucleophile) is an active-site residue. Residues leucine 270, glutamine 273, asparagine 311, glycine 313, and phenylalanine 314 each contribute to the L-glutamine site. Residues histidine 353 and glutamate 355 contribute to the active site.

This sequence belongs to the CarA family. As to quaternary structure, composed of two chains; the small (or glutamine) chain promotes the hydrolysis of glutamine to ammonia, which is used by the large (or ammonia) chain to synthesize carbamoyl phosphate. Tetramer of heterodimers (alpha,beta)4.

It carries out the reaction hydrogencarbonate + L-glutamine + 2 ATP + H2O = carbamoyl phosphate + L-glutamate + 2 ADP + phosphate + 2 H(+). The catalysed reaction is L-glutamine + H2O = L-glutamate + NH4(+). It functions in the pathway amino-acid biosynthesis; L-arginine biosynthesis; carbamoyl phosphate from bicarbonate: step 1/1. The protein operates within pyrimidine metabolism; UMP biosynthesis via de novo pathway; (S)-dihydroorotate from bicarbonate: step 1/3. Small subunit of the glutamine-dependent carbamoyl phosphate synthetase (CPSase). CPSase catalyzes the formation of carbamoyl phosphate from the ammonia moiety of glutamine, carbonate, and phosphate donated by ATP, constituting the first step of 2 biosynthetic pathways, one leading to arginine and/or urea and the other to pyrimidine nucleotides. The small subunit (glutamine amidotransferase) binds and cleaves glutamine to supply the large subunit with the substrate ammonia. The protein is Carbamoyl phosphate synthase small chain of Escherichia coli O157:H7.